Reading from the N-terminus, the 102-residue chain is uncharacterized protein (102 aa).

Functionally, essential for virus function. This is an uncharacterized protein from Saccharolobus solfataricus (Sulfolobus solfataricus).